The primary structure comprises 142 residues: Large ribosomal subunit protein uL13 (142 aa).

It belongs to the universal ribosomal protein uL13 family. In terms of assembly, part of the 50S ribosomal subunit.

This protein is one of the early assembly proteins of the 50S ribosomal subunit, although it is not seen to bind rRNA by itself. It is important during the early stages of 50S assembly. This chain is Large ribosomal subunit protein uL13, found in Halorhodospira halophila (strain DSM 244 / SL1) (Ectothiorhodospira halophila (strain DSM 244 / SL1)).